Consider the following 171-residue polypeptide: Putative lipoprotein LppO (171 aa).

The N-terminal stretch at 1–28 is a signal peptide; sequence MTDPRHTVRIAVGATALGVSALGATLPA. C29 carries N-palmitoyl cysteine lipidation. C29 is lipidated: S-diacylglycerol cysteine.

It localises to the cell membrane. The sequence is that of Putative lipoprotein LppO (lppO) from Mycobacterium tuberculosis (strain CDC 1551 / Oshkosh).